Reading from the N-terminus, the 559-residue chain is Vacuolar protein 8 (559 aa).

Gly2 carries the N-myristoyl glycine lipid modification. Residue Cys4 is the site of S-palmitoyl cysteine attachment. ARM repeat units lie at residues 77 to 116, 118 to 157, 159 to 198, 200 to 239, 243 to 282, 284 to 323, 325 to 365, and 409 to 448; these read TERD…NLAV, TENK…NLAT, EENK…NMTH, DENR…NIAV, NRRK…NLAS, EKYQ…NISI, PMNE…NLAA, and DDLK…NLSS.

It belongs to the beta-catenin family.

The protein resides in the vacuole membrane. In terms of biological role, functions in both vacuole inheritance and protein targeting from the cytoplasm to vacuole. This chain is Vacuolar protein 8 (VAC8), found in Gibberella zeae (strain ATCC MYA-4620 / CBS 123657 / FGSC 9075 / NRRL 31084 / PH-1) (Wheat head blight fungus).